A 339-amino-acid polypeptide reads, in one-letter code: Phenylalanine--tRNA ligase alpha subunit (339 aa).

Glu253 provides a ligand contact to Mg(2+).

This sequence belongs to the class-II aminoacyl-tRNA synthetase family. Phe-tRNA synthetase alpha subunit type 1 subfamily. In terms of assembly, tetramer of two alpha and two beta subunits. Mg(2+) is required as a cofactor.

It is found in the cytoplasm. It carries out the reaction tRNA(Phe) + L-phenylalanine + ATP = L-phenylalanyl-tRNA(Phe) + AMP + diphosphate + H(+). The polypeptide is Phenylalanine--tRNA ligase alpha subunit (Thioalkalivibrio sulfidiphilus (strain HL-EbGR7)).